We begin with the raw amino-acid sequence, 310 residues long: Methionyl-tRNA formyltransferase (310 aa).

Residue 109 to 112 (SLLP) participates in (6S)-5,6,7,8-tetrahydrofolate binding.

Belongs to the Fmt family.

It carries out the reaction L-methionyl-tRNA(fMet) + (6R)-10-formyltetrahydrofolate = N-formyl-L-methionyl-tRNA(fMet) + (6S)-5,6,7,8-tetrahydrofolate + H(+). In terms of biological role, attaches a formyl group to the free amino group of methionyl-tRNA(fMet). The formyl group appears to play a dual role in the initiator identity of N-formylmethionyl-tRNA by promoting its recognition by IF2 and preventing the misappropriation of this tRNA by the elongation apparatus. In Pseudomonas putida (strain ATCC 47054 / DSM 6125 / CFBP 8728 / NCIMB 11950 / KT2440), this protein is Methionyl-tRNA formyltransferase.